Consider the following 130-residue polypeptide: Small ribosomal subunit protein uS9 (130 aa).

Belongs to the universal ribosomal protein uS9 family.

In Cupriavidus pinatubonensis (strain JMP 134 / LMG 1197) (Cupriavidus necator (strain JMP 134)), this protein is Small ribosomal subunit protein uS9.